The following is a 208-amino-acid chain: GATA transcription factor 20 (208 aa).

The GATA-type zinc-finger motif lies at 94 to 119; it reads CASCDTTSTPLWRNGPKGPKSLCNAC.

The protein belongs to the type IV zinc-finger family. Class B subfamily.

Its subcellular location is the nucleus. In terms of biological role, transcriptional regulator that specifically binds 5'-GATA-3' or 5'-GAT-3' motifs within gene promoters. The protein is GATA transcription factor 20 of Arabidopsis thaliana (Mouse-ear cress).